The sequence spans 273 residues: Phosphatidylglycerol--prolipoprotein diacylglyceryl transferase (273 aa).

The next 7 helical transmembrane spans lie at 21–41, 60–80, 95–115, 124–144, 176–196, 203–223, and 237–257; these read VSVR…LWLA, LLFA…VIFY, VWTG…AMFW, FFGV…MGRM, SQLY…NWFI, GAVS…VEFV, and ISMG…MMVW. R143 provides a ligand contact to a 1,2-diacyl-sn-glycero-3-phospho-(1'-sn-glycerol).

Belongs to the Lgt family.

It localises to the cell inner membrane. The enzyme catalyses L-cysteinyl-[prolipoprotein] + a 1,2-diacyl-sn-glycero-3-phospho-(1'-sn-glycerol) = an S-1,2-diacyl-sn-glyceryl-L-cysteinyl-[prolipoprotein] + sn-glycerol 1-phosphate + H(+). It participates in protein modification; lipoprotein biosynthesis (diacylglyceryl transfer). Its function is as follows. Catalyzes the transfer of the diacylglyceryl group from phosphatidylglycerol to the sulfhydryl group of the N-terminal cysteine of a prolipoprotein, the first step in the formation of mature lipoproteins. The protein is Phosphatidylglycerol--prolipoprotein diacylglyceryl transferase of Vibrio campbellii (strain ATCC BAA-1116).